Here is a 46-residue protein sequence, read N- to C-terminus: uncharacterized protein (46 aa).

Residues 12–34 (HFNHFVIALSFIYGLTELGYLLL) traverse the membrane as a helical segment.

It localises to the cell membrane. This is an uncharacterized protein from Bacillus subtilis (strain 168).